A 348-amino-acid polypeptide reads, in one-letter code: NADH-quinone oxidoreductase subunit H (348 aa).

9 helical membrane passes run 13-33 (LIMVGQSLLLLVCLLVAIAFL), 50-70 (PNVVGPFGLFQSFADLLKFIL), 82-102 (AVFLLAPLVAVTLALATYAVI), 115-135 (VGILYIFAISSLEVYGIIMGG), 161-181 (IGLVIVTVLLCVGSLNLTDIV), 198-218 (FLDWHWLSLFPMFIVFFISGL), 258-278 (AIVLICCLTTILFLGGWLPIV), 285-305 (WVPGIVWFALKGCMVFFMIAL), and 321-341 (LGWKVFLPLSLAMVVIVAFVL).

Belongs to the complex I subunit 1 family. NDH-1 is composed of 14 different subunits. Subunits NuoA, H, J, K, L, M, N constitute the membrane sector of the complex.

Its subcellular location is the cell inner membrane. The catalysed reaction is a quinone + NADH + 5 H(+)(in) = a quinol + NAD(+) + 4 H(+)(out). In terms of biological role, NDH-1 shuttles electrons from NADH, via FMN and iron-sulfur (Fe-S) centers, to quinones in the respiratory chain. The immediate electron acceptor for the enzyme in this species is believed to be ubiquinone. Couples the redox reaction to proton translocation (for every two electrons transferred, four hydrogen ions are translocated across the cytoplasmic membrane), and thus conserves the redox energy in a proton gradient. This subunit may bind ubiquinone. The chain is NADH-quinone oxidoreductase subunit H from Agrobacterium fabrum (strain C58 / ATCC 33970) (Agrobacterium tumefaciens (strain C58)).